The sequence spans 852 residues: Gamma-tubulin complex component 2 homolog (852 aa).

Ser-73 is modified (phosphoserine).

Belongs to the TUBGCP family. As to quaternary structure, gamma-tubulin small complex (Gamma TuSC) is a heterotetrameric complex which contains two molecules of gamma-tubulin, and one molecule each of Dgrip84 and Dgrip91. The gamma-tubulin in this complex binds preferentially to GDP over GTP.

Its subcellular location is the cytoplasm. It is found in the cytoskeleton. It localises to the microtubule organizing center. The protein resides in the centrosome. The protein localises to the perinuclear region. This Drosophila melanogaster (Fruit fly) protein is Gamma-tubulin complex component 2 homolog (Grip84).